We begin with the raw amino-acid sequence, 214 residues long: Ribosomal RNA small subunit methyltransferase G (214 aa).

S-adenosyl-L-methionine-binding positions include glycine 73, leucine 78, 124–125 (VE), and arginine 139.

This sequence belongs to the methyltransferase superfamily. RNA methyltransferase RsmG family.

It localises to the cytoplasm. The enzyme catalyses guanosine(527) in 16S rRNA + S-adenosyl-L-methionine = N(7)-methylguanosine(527) in 16S rRNA + S-adenosyl-L-homocysteine. Its function is as follows. Specifically methylates the N7 position of guanine in position 527 of 16S rRNA. This is Ribosomal RNA small subunit methyltransferase G from Aeromonas hydrophila subsp. hydrophila (strain ATCC 7966 / DSM 30187 / BCRC 13018 / CCUG 14551 / JCM 1027 / KCTC 2358 / NCIMB 9240 / NCTC 8049).